Reading from the N-terminus, the 344-residue chain is tRNA N6-adenosine threonylcarbamoyltransferase (344 aa).

The Fe cation site is built by H113 and H117. Substrate contacts are provided by residues 135–139 (LVSGG), D169, G182, D186, and N278. Residue D306 coordinates Fe cation. The disordered stretch occupies residues 325 to 344 (ESPISVGTDPSLSVETPQVF). Over residues 326–344 (SPISVGTDPSLSVETPQVF) the composition is skewed to polar residues.

Belongs to the KAE1 / TsaD family. Fe(2+) is required as a cofactor.

It is found in the cytoplasm. It catalyses the reaction L-threonylcarbamoyladenylate + adenosine(37) in tRNA = N(6)-L-threonylcarbamoyladenosine(37) in tRNA + AMP + H(+). In terms of biological role, required for the formation of a threonylcarbamoyl group on adenosine at position 37 (t(6)A37) in tRNAs that read codons beginning with adenine. Is involved in the transfer of the threonylcarbamoyl moiety of threonylcarbamoyl-AMP (TC-AMP) to the N6 group of A37, together with TsaE and TsaB. TsaD likely plays a direct catalytic role in this reaction. This is tRNA N6-adenosine threonylcarbamoyltransferase from Corynebacterium glutamicum (strain R).